The chain runs to 110 residues: MKFVLLFGVLLVTLFSYSSAEMLDDFDQADEDELLSLIEKEEARKDCIPKHHECTNNKHGCCRGHLFKYKCQCTTVVTQSGEETERCFCGTPPRHKAAELVVGFGKKIFG.

An N-terminal signal peptide occupies residues 1–20 (MKFVLLFGVLLVTLFSYSSA). The propeptide occupies 21–44 (EMLDDFDQADEDELLSLIEKEEAR). 4 cysteine pairs are disulfide-bonded: Cys47/Cys62, Cys54/Cys71, Cys61/Cys89, and Cys73/Cys87.

This sequence belongs to the neurotoxin 19 (CSTX) family. 03 subfamily. In terms of tissue distribution, expressed by the venom gland.

The protein resides in the secreted. In Lycosa singoriensis (Wolf spider), this protein is U1-lycotoxin-Ls1jj.